The primary structure comprises 308 residues: GTPase IMAP family member 5 (308 aa).

Over 1-283 (MEHLQKSTYG…VKSCWSSHTA (283 aa)) the chain is Cytoplasmic. Positions 24–227 (SSCLRILLVG…HSNDLFLHAE (204 aa)) constitute an AIG1-type G domain. GTP is bound by residues 33–41 (GKSGCGKSA), serine 54, 151–153 (RKE), and asparagine 188. Residues 284-304 (ACALLIVLGLTLLTTFINLCI) form a helical; Anchor for type IV membrane protein membrane-spanning segment. Over 305 to 308 (SRCK) the chain is Mitochondrial intermembrane.

The protein belongs to the TRAFAC class TrmE-Era-EngA-EngB-Septin-like GTPase superfamily. AIG1/Toc34/Toc159-like paraseptin GTPase family. IAN subfamily. As to quaternary structure, interacts with BAD, BAK1, BAX, BCL2, BCL2L1/Bcl-xL and BCL2L11/BimEL. The interaction with BAX is increased, when cells initiate apoptosis upon IL2 withdrawal. Forms a complex with BCL2L1 or MCL1 and HSPA8/HSC70; the interaction between HSPA8 and BCL2L1 or MCL1 is impaired in the absence of GIMAP5. May interact (via N-terminus) with microtubules. In terms of tissue distribution, expressed in thymus (in thymocytes), spleen (in splenocytes), lymph node and lung. Highly expressed in T lymphocytes. Expressed in B cells and in distinct lineages of hematopoietic bone marrow cells, including natural killer, B, T, myeloid and erythroid lineages. Expressed in liver endothelial cells.

Its subcellular location is the lysosome. The protein resides in the lysosome membrane. It is found in the endosome. The protein localises to the multivesicular body membrane. It localises to the endosome membrane. In terms of biological role, plays a role in T lymphocyte development and the optimal generation of CD4/CD8 double-positive thymocytes. Inhibitor of GSK3A. May act by sequestering GSK3A in cytoplasmic vesicles and impairing its translocation to the nucleus. Consequently, impairs GSK3A-dependent transcriptional program and regulation of the DNA damage response occurring during T cells proliferation. Required for the survival of bone marrow hematopoietic stem cells, as well as of peripheral T cells, natural killer (NK) and NK T-cell development and the maintenance of normal liver function. May promote the survival of mature T lymphocytes upon cytokine withdrawal. May regulate Ca(2+) homeostasis by modulating lysosomal Ca(2+) stores, preventing its accumulation in the absence of T cell activation. May play a role in mitochondrial DNA segregation in hematopoietic tissues. Is a regulator of liver endothelial cell homeostasis. The sequence is that of GTPase IMAP family member 5 (Gimap5) from Mus musculus (Mouse).